An 882-amino-acid chain; its full sequence is Cutinase transcription factor 1 beta (882 aa).

The segment covering 1 to 20 has biased composition (low complexity); the sequence is MNAETPEGSAAPPSPASTSA. The interval 1-49 is disordered; sequence MNAETPEGSAAPPSPASTSAKTVTDKTNKKRASPSGDSEQPTKVTKRRA. Positions 53-81 form a DNA-binding region, zn(2)-C6 fungal-type; the sequence is CVSCRARKVRCDVVEGAPCGNCRWDNVEC. A disordered region spans residues 117–148; sequence NPMGMSTADLRRPSSGSAISTSSIDGPSSFLS. Over residues 130–139 the composition is skewed to low complexity; sequence SSGSAISTSS.

The protein resides in the nucleus. This is Cutinase transcription factor 1 beta (CTF1-BETA) from Fusarium vanettenii (Neocosmospora pisi).